The chain runs to 131 residues: Large-conductance mechanosensitive channel (131 aa).

3 helical membrane-spanning segments follow: residues 8-28 (FALK…GAFG), 30-50 (IVTS…VGGI), and 72-92 (GQFI…FMFI).

It belongs to the MscL family. Homopentamer.

It localises to the cell membrane. In terms of biological role, channel that opens in response to stretch forces in the membrane lipid bilayer. May participate in the regulation of osmotic pressure changes within the cell. The polypeptide is Large-conductance mechanosensitive channel (Alkaliphilus oremlandii (strain OhILAs) (Clostridium oremlandii (strain OhILAs))).